A 317-amino-acid polypeptide reads, in one-letter code: Acetyl-coenzyme A carboxylase carboxyl transferase subunit alpha (317 aa).

One can recognise a CoA carboxyltransferase C-terminal domain in the interval 37-291 (KLQEKVDKLL…GNAIEDALDD (255 aa)).

The protein belongs to the AccA family. In terms of assembly, acetyl-CoA carboxylase is a heterohexamer composed of biotin carboxyl carrier protein (AccB), biotin carboxylase (AccC) and two subunits each of ACCase subunit alpha (AccA) and ACCase subunit beta (AccD).

The protein localises to the cytoplasm. The catalysed reaction is N(6)-carboxybiotinyl-L-lysyl-[protein] + acetyl-CoA = N(6)-biotinyl-L-lysyl-[protein] + malonyl-CoA. The protein operates within lipid metabolism; malonyl-CoA biosynthesis; malonyl-CoA from acetyl-CoA: step 1/1. Its function is as follows. Component of the acetyl coenzyme A carboxylase (ACC) complex. First, biotin carboxylase catalyzes the carboxylation of biotin on its carrier protein (BCCP) and then the CO(2) group is transferred by the carboxyltransferase to acetyl-CoA to form malonyl-CoA. The chain is Acetyl-coenzyme A carboxylase carboxyl transferase subunit alpha from Rhodospirillum centenum (strain ATCC 51521 / SW).